Consider the following 60-residue polypeptide: Small ribosomal subunit protein bS21 (60 aa).

The interval 39–60 (ETPQEKRKRKAVARRRQRTRRR) is disordered. Residues 44-60 (KRKRKAVARRRQRTRRR) show a composition bias toward basic residues.

This sequence belongs to the bacterial ribosomal protein bS21 family.

The polypeptide is Small ribosomal subunit protein bS21 (Microcystis aeruginosa (strain NIES-843 / IAM M-2473)).